The primary structure comprises 473 residues: BPI fold-containing family B member 3 (473 aa).

The first 20 residues, 1–20 (MMLGVYTLLLLWGLATPCLG), serve as a signal peptide directing secretion. N139 carries N-linked (GlcNAc...) asparagine glycosylation. Cysteines 161 and 196 form a disulfide.

The protein belongs to the BPI/LBP/Plunc superfamily. BPI/LBP family.

The protein resides in the secreted. In terms of biological role, may have the capacity to recognize and bind specific classes of odorants. May act as a carrier molecule, transporting odorants across the mucus layer to access receptor sites. May serve as a primary defense mechanism by recognizing and removing potentially harmful odorants or pathogenic microorganisms from the mucosa or clearing excess odorant from mucus to enable new odorant stimuli to be received. This chain is BPI fold-containing family B member 3, found in Mus musculus (Mouse).